Here is a 217-residue protein sequence, read N- to C-terminus: Ribonuclease T (217 aa).

An Exonuclease domain is found at 20–195 (VVVDVETAGF…YDTEKTAELF (176 aa)). 4 residues coordinate Mg(2+): Asp23, Glu25, His182, and Asp187. His182 serves as the catalytic Proton donor/acceptor.

It belongs to the RNase T family. Homodimer. Mg(2+) is required as a cofactor.

Its function is as follows. Trims short 3' overhangs of a variety of RNA species, leaving a one or two nucleotide 3' overhang. Responsible for the end-turnover of tRNA: specifically removes the terminal AMP residue from uncharged tRNA (tRNA-C-C-A). Also appears to be involved in tRNA biosynthesis. The sequence is that of Ribonuclease T from Vibrio vulnificus (strain CMCP6).